Consider the following 366-residue polypeptide: Cobalt-precorrin-5B C(1)-methyltransferase (366 aa).

Belongs to the CbiD family.

It carries out the reaction Co-precorrin-5B + S-adenosyl-L-methionine = Co-precorrin-6A + S-adenosyl-L-homocysteine. It participates in cofactor biosynthesis; adenosylcobalamin biosynthesis; cob(II)yrinate a,c-diamide from sirohydrochlorin (anaerobic route): step 6/10. Its function is as follows. Catalyzes the methylation of C-1 in cobalt-precorrin-5B to form cobalt-precorrin-6A. This chain is Cobalt-precorrin-5B C(1)-methyltransferase, found in Pseudomonas paraeruginosa (strain DSM 24068 / PA7) (Pseudomonas aeruginosa (strain PA7)).